A 237-amino-acid chain; its full sequence is Ribosomal RNA small subunit methyltransferase G (237 aa).

Residues Gly-72, Leu-77, 123 to 124 (AE), and Arg-138 contribute to the S-adenosyl-L-methionine site. The disordered stretch occupies residues 210 to 237 (TALETGTKAAPSRSPRKPGGRKKRGRKR). Basic residues predominate over residues 223 to 237 (SPRKPGGRKKRGRKR).

This sequence belongs to the methyltransferase superfamily. RNA methyltransferase RsmG family.

It is found in the cytoplasm. Functionally, specifically methylates the N7 position of guanine in position 518 of 16S rRNA. This Thermobifida fusca (strain YX) protein is Ribosomal RNA small subunit methyltransferase G.